A 1040-amino-acid chain; its full sequence is Multidrug resistance protein MdtB (1040 aa).

12 helical membrane-spanning segments follow: residues Leu25 to Ala45, Leu347 to Ala367, Ile369 to Leu389, Leu396 to Ile416, Ile440 to Phe460, Phe472 to Pro492, Trp537 to Ile557, Leu863 to Val883, Phe888 to Ala908, Ile910 to Ile930, Ile968 to Val988, and Ile998 to Ile1018.

This sequence belongs to the resistance-nodulation-cell division (RND) (TC 2.A.6) family. MdtB subfamily. As to quaternary structure, part of a tripartite efflux system composed of MdtA, MdtB and MdtC. MdtB forms a heteromultimer with MdtC.

The protein localises to the cell inner membrane. The chain is Multidrug resistance protein MdtB from Salmonella choleraesuis (strain SC-B67).